The following is a 359-amino-acid chain: Phosphate acyltransferase (359 aa).

The segment at 337-359 (AAGAAQPAPETEVPGAHPSPHVA) is disordered.

It belongs to the PlsX family. Homodimer. Probably interacts with PlsY.

It localises to the cytoplasm. It carries out the reaction a fatty acyl-[ACP] + phosphate = an acyl phosphate + holo-[ACP]. The protein operates within lipid metabolism; phospholipid metabolism. Catalyzes the reversible formation of acyl-phosphate (acyl-PO(4)) from acyl-[acyl-carrier-protein] (acyl-ACP). This enzyme utilizes acyl-ACP as fatty acyl donor, but not acyl-CoA. The sequence is that of Phosphate acyltransferase from Cupriavidus necator (strain ATCC 17699 / DSM 428 / KCTC 22496 / NCIMB 10442 / H16 / Stanier 337) (Ralstonia eutropha).